A 236-amino-acid polypeptide reads, in one-letter code: Peptidase E (236 aa).

Residues S122, D137, and H159 each act as charge relay system in the active site.

It belongs to the peptidase S51 family.

The protein localises to the cytoplasm. It carries out the reaction Dipeptidase E catalyzes the hydrolysis of dipeptides Asp-|-Xaa. It does not act on peptides with N-terminal Glu, Asn or Gln, nor does it cleave isoaspartyl peptides.. Functionally, hydrolyzes dipeptides containing N-terminal aspartate residues. May play a role in allowing the cell to use peptide aspartate to spare carbon otherwise required for the synthesis of the aspartate family of amino acids. The chain is Peptidase E from Shewanella oneidensis (strain ATCC 700550 / JCM 31522 / CIP 106686 / LMG 19005 / NCIMB 14063 / MR-1).